Consider the following 87-residue polypeptide: Putative regulatory protein GWCH70_1057 (87 aa).

It belongs to the RemA family.

This Geobacillus sp. (strain WCH70) protein is Putative regulatory protein GWCH70_1057.